The sequence spans 253 residues: Claudin domain-containing protein 1 (253 aa).

A helical transmembrane segment spans residues 5 to 25 (FATAFVIACVLSLISTIYMAA). Residues asparagine 42 and asparagine 72 are each glycosylated (N-linked (GlcNAc...) asparagine). Helical transmembrane passes span 141–161 (FLLP…GLCA), 175–195 (ILHL…VAGI), and 216–236 (FCLA…FIWA).

This sequence belongs to the PMP-22/EMP/MP20 family. In the brain, highly expressed in endothelial cells of the cerebellum compared to other regions (at protein level).

The protein resides in the cell junction. It is found in the tight junction. It localises to the cell membrane. In terms of biological role, plays a role in negatively regulating the permeability of cells to small molecules. In Mus musculus (Mouse), this protein is Claudin domain-containing protein 1 (Cldnd1).